The primary structure comprises 526 residues: MQASDPIPPQLGVPFATSYAALTVAAVTLLAALLVHELSAYSKRRSMPPGPFRWPLIGNALQMPQIHPWLTFSRWARVYGDIFYLDALGQHIVVINSATVARELLDRRSSIYSGRPHLTMVGDLAGYDRMIVMQPYGDELRQQRRLISQTLSTSTIGQYYDIQEAAARRLVLGVIDDPSSLEGQIKMNIASIIMLVTYGYTVKGTEDVFFGRAIEIMDNLTLAARPGVWLADMIPQLKYFPSWMPGLSSLKAAEAWRKLLHTTNGMVYQWCKENSENGTAHLPNLCASVLAQAEGKATLQLEESLMWAALTVLSGGLDTNISTILSFILAMLHYPDVQKKAQAEIDAVVGSGRLPQISDKSSLPYIRSVIAESYRWLPATPLSVPHALDEDDIYDGSFLPKGSIIMPNVWHMLHDPKIYPEPDAFKPERYGGSDIEMKKVTDIAFGFGRRACPGFYFAEGTIFSIVVTVLATCDIVPVVNDHGQEIIPDIRYSTNVVLCPEDVKCTFRPRSEQAKSALIDSMTGVL.

The helical transmembrane segment at 15–35 (FATSYAALTVAAVTLLAALLV) threads the bilayer. Residues N219, N277, and N320 are each glycosylated (N-linked (GlcNAc...) asparagine). Residue C452 coordinates heme.

It belongs to the cytochrome P450 family. Requires heme as cofactor.

The protein resides in the membrane. Its pathway is secondary metabolite biosynthesis. Functionally, cytochrome P450 monooxygenase that is able to use anthracene, carbazole and phenanthrene as substrates for oxidation. These multifunctional properties against a series of polycyclic aromatic hydrocarbons (PAHs) suggest that CYP226 would play important roles, at least in part, in fungal metabolic systems involved in xenobiotic detoxification. This Postia placenta (strain ATCC 44394 / Madison 698-R) (Brown rot fungus) protein is Cytochrome P450 monooxygenase 226.